Reading from the N-terminus, the 649-residue chain is Transmembrane and coiled-coil domains protein 1 (649 aa).

N-acetylmethionine is present on Met-1. Disordered regions lie at residues 1–37 (MEPSGSEQLYEDPDPGGKSQDAEARRQTESEQKLSKM), 58–83 (HQRRRSSVSPHDVQQIQTDPEPEVDL), 110–166 (RVPP…PTSS), and 197–222 (LAQTSSAVASSTDGSIHTESVDGIPD). Residues 1–587 (MEPSGSEQLY…ARNLLGKLIN (587 aa)) lie on the Cytoplasmic side of the membrane. Basic and acidic residues predominate over residues 20 to 34 (QDAEARRQTESEQKL). Over residues 64-75 (SVSPHDVQQIQT) the composition is skewed to polar residues. Residues 113 to 125 (PKMKRGTSLHSRR) show a composition bias toward basic residues. Residues 156 to 166 (SSSTTDAPTSS) are compositionally biased toward low complexity. Residues 197-214 (LAQTSSAVASSTDGSIHT) are compositionally biased toward polar residues. Residues 224-310 (QRTKAAIAHL…KLREVEQNGI (87 aa)) are a coiled coil. A phosphoserine mark is found at Ser-378 and Ser-410. The segment at 411 to 433 (PKYGSEEDCSSATSGSVGANSTT) is disordered. Positions 420-433 (SSATSGSVGANSTT) are enriched in polar residues. Positions 457–566 (ALLHEVQEIR…KMELQQQQQQ (110 aa)) form a coiled coil. Helical transmembrane passes span 588 to 608 (ILLAVMAVLLVFVSTVANCVV) and 621 to 641 (LFLVAFIAFLWKHWDALFSYV). Topologically, residues 642-649 (DRLFSPPR) are cytoplasmic.

The protein belongs to the TEX28 family. In terms of assembly, may form homodimers and heterodimers with TMCC2 or TMCC3 via the coiled-coil domains. Interacts with ribosomal proteins RPL4 and RPS6.

The protein resides in the endoplasmic reticulum membrane. Endoplasmic reticulum membrane protein that promotes endoplasmic reticulum-associated endosome fission. Localizes to contact sites between the endoplasmic reticulum and endosomes and acts by promoting recruitment of the endoplasmic reticulum to endosome tubules for fission. Endosome membrane fission of early and late endosomes is essential to separate regions destined for lysosomal degradation from carriers to be recycled to the plasma membrane. This chain is Transmembrane and coiled-coil domains protein 1 (Tmcc1), found in Mus musculus (Mouse).